The sequence spans 386 residues: Zinc finger protein 385A (386 aa).

Residues 74 to 98 (ISCNVCQIRFNSQSQAEAHYKGNRH) form a Matrin-type 1 zinc finger. The interval 88–193 (QAEAHYKGNR…ASLPGGSKEE (106 aa)) is disordered. Residues 103-121 (KGIEAAKTRGREPSVRESG) show a composition bias toward basic and acidic residues. The segment at 145–351 (NGLGPAPGSP…AGSPLSLRPA (207 aa)) is necessary for binding to ITPR1, CEBPA and p53/TP53 mRNAs. Phosphoserine is present on S185. Residues 201-225 (LYCALCKVAVNSLSQLEAHNKGTKH) form a Matrin-type 2 zinc finger. T248 is modified (phosphothreonine). The Matrin-type 3 zinc-finger motif lies at 261–285 (FHCEICNVKVNSEVQLKQHISSRRH). The segment at 279 to 305 (HISSRRHRDGVAGKPNPLLSRHKKPRG) is disordered.

As to quaternary structure, interacts with p53/TP53; the interaction is direct and enhances p53/TP53 transactivation functions on cell-cycle arrest target genes, resulting in growth arrest. Interacts with ELAVL1; the interaction is indirect, mRNA-dependent and may regulate p53/TP53 expression. Ubiquitinated upon prolonged exposure to genotoxic stress, which leads to proteasomal degradation of ZNF385A and releases p53/TP53 from cell-cycle arrest target gene promoters. Expressed in brain and testis (at protein level). In brain, the expression is located to olfactory bulb, cerebral cortex, hippocampus, satellite cells and Purkinje cells of the cerebellum molecular layer. Detected in bone marrow, white and brown adipose tissue, lung and at lower levels in the thymus.

The protein resides in the cytoplasm. It localises to the nucleus. The protein localises to the nucleolus. Its subcellular location is the cell projection. It is found in the dendrite. Functionally, RNA-binding protein that affects the localization and the translation of a subset of mRNA. May play a role in adipogenesis through binding to the 3'-UTR of CEBPA mRNA and regulation of its translation. Targets ITPR1 mRNA to dendrites in Purkinje cells, and may regulate its activity-dependent translation. With ELAVL1, binds the 3'-UTR of p53/TP53 mRNAs to control their nuclear export induced by CDKN2A. Hence, may regulate p53/TP53 expression and mediate in part the CDKN2A anti-proliferative activity. May also bind CCNB1 mRNA. Alternatively, may also regulate p53/TP53 activity through direct protein-protein interaction. Interacts with p53/TP53 and promotes cell-cycle arrest over apoptosis enhancing preferentially the DNA binding and transactivation of p53/TP53 on cell-cycle arrest target genes over proapoptotic target genes. May also regulate the ubiquitination and stability of CDKN1A promoting DNA damage-induced cell cycle arrest. Also plays a role in megakaryocytes differentiation. The chain is Zinc finger protein 385A (Znf385a) from Mus musculus (Mouse).